The following is a 319-amino-acid chain: Cytochrome c biogenesis protein CcsA (319 aa).

7 helical membrane-spanning segments follow: residues 9 to 29 (ILTH…LITL), 44 to 64 (GVIG…AYSG), 71 to 91 (LYES…FPYL), 143 to 163 (MVLG…LLVI), 225 to 245 (IISL…VWAN), 259 to 273 (TWAF…IYLH), and 286 to 306 (AIVA…VNLL).

It belongs to the CcmF/CycK/Ccl1/NrfE/CcsA family. May interact with Ccs1.

It localises to the plastid. Its subcellular location is the chloroplast thylakoid membrane. Functionally, required during biogenesis of c-type cytochromes (cytochrome c6 and cytochrome f) at the step of heme attachment. The sequence is that of Cytochrome c biogenesis protein CcsA from Oenothera parviflora (Small-flowered evening primrose).